Consider the following 96-residue polypeptide: Co-chaperonin GroES (96 aa).

This sequence belongs to the GroES chaperonin family. Heptamer of 7 subunits arranged in a ring. Interacts with the chaperonin GroEL.

It is found in the cytoplasm. Functionally, together with the chaperonin GroEL, plays an essential role in assisting protein folding. The GroEL-GroES system forms a nano-cage that allows encapsulation of the non-native substrate proteins and provides a physical environment optimized to promote and accelerate protein folding. GroES binds to the apical surface of the GroEL ring, thereby capping the opening of the GroEL channel. The polypeptide is Co-chaperonin GroES (Aliivibrio fischeri (strain ATCC 700601 / ES114) (Vibrio fischeri)).